The sequence spans 533 residues: Putative sel1-like repeat-containing protein L21 (533 aa).

5 Sel1-like repeats span residues 105–140 (VLSQ…NQGL), 141–172 (SFAQ…QSGY), 173–206 (YLSN…NQGC), 207–242 (NISQ…KQGN), and 243–278 (YFSQ…NCGH).

In Acanthamoeba polyphaga mimivirus (APMV), this protein is Putative sel1-like repeat-containing protein L21.